The primary structure comprises 89 residues: Small ribosomal subunit protein uS15 (89 aa).

It belongs to the universal ribosomal protein uS15 family. In terms of assembly, part of the 30S ribosomal subunit. Forms a bridge to the 50S subunit in the 70S ribosome, contacting the 23S rRNA.

In terms of biological role, one of the primary rRNA binding proteins, it binds directly to 16S rRNA where it helps nucleate assembly of the platform of the 30S subunit by binding and bridging several RNA helices of the 16S rRNA. Its function is as follows. Forms an intersubunit bridge (bridge B4) with the 23S rRNA of the 50S subunit in the ribosome. In Pseudomonas fluorescens (strain ATCC BAA-477 / NRRL B-23932 / Pf-5), this protein is Small ribosomal subunit protein uS15.